A 124-amino-acid polypeptide reads, in one-letter code: Protein ApaG (124 aa).

Positions 1–124 (MSRYELTVQV…FALAMPRMLH (124 aa)) constitute an ApaG domain.

The protein is Protein ApaG of Ralstonia nicotianae (strain ATCC BAA-1114 / GMI1000) (Ralstonia solanacearum).